Reading from the N-terminus, the 1495-residue chain is ABC transporter C family member 12 (1495 aa).

A run of 11 helical transmembrane segments spans residues 38–58, 76–96, 110–130, 146–166, 173–195, 303–323, 337–357, 420–440, 441–461, 528–548, and 558–578; these read VMLV…WIIF, VLGL…VMGI, FEVA…VLIG, FGVL…LPLK, ALYL…LIYI, FWLA…GPVI, AWVG…GVLC, GLWS…QQLG, VASL…TLII, FILN…FVLL, and FTSL…PNLL. An ABC transmembrane type-1 1 domain is found at 303–583; the sequence is FWLAGIFKIG…LPNLLSQVVN (281 aa). An ABC transporter 1 domain is found at 615–839; the sequence is ISIKNGYFSW…GILFKKLMEN (225 aa). 650-657 contacts ATP; the sequence is GGTGEGKT. The next 5 helical transmembrane spans lie at 907–927, 949–969, 1042–1062, 1140–1160, and 1166–1186; these read AVGG…TEVL, PGFY…VTFT, FALI…LLIL, LETL…LQNG, and AGFA…TSLL. Residues 914–1198 enclose the ABC transmembrane type-1 2 domain; sequence VMILLACYLA…VLRQASRAEN (285 aa). In terms of domain architecture, ABC transporter 2 spans 1235–1469; the sequence is IKFEDVHLRY…DTSAFFRMVH (235 aa). 1269-1276 is an ATP binding site; that stretch reads GRTGAGKS.

It belongs to the ABC transporter superfamily. ABCC family. Conjugate transporter (TC 3.A.1.208) subfamily. In terms of tissue distribution, ubiquitous.

It localises to the membrane. The enzyme catalyses ATP + H2O + xenobioticSide 1 = ADP + phosphate + xenobioticSide 2.. Its function is as follows. Pump for glutathione S-conjugates. This Arabidopsis thaliana (Mouse-ear cress) protein is ABC transporter C family member 12 (ABCC12).